Consider the following 302-residue polypeptide: Phosphoribosylaminoimidazole-succinocarboxamide synthase (302 aa).

The protein belongs to the SAICAR synthetase family.

The enzyme catalyses 5-amino-1-(5-phospho-D-ribosyl)imidazole-4-carboxylate + L-aspartate + ATP = (2S)-2-[5-amino-1-(5-phospho-beta-D-ribosyl)imidazole-4-carboxamido]succinate + ADP + phosphate + 2 H(+). It participates in purine metabolism; IMP biosynthesis via de novo pathway; 5-amino-1-(5-phospho-D-ribosyl)imidazole-4-carboxamide from 5-amino-1-(5-phospho-D-ribosyl)imidazole-4-carboxylate: step 1/2. This is Phosphoribosylaminoimidazole-succinocarboxamide synthase from Polaromonas sp. (strain JS666 / ATCC BAA-500).